Reading from the N-terminus, the 366-residue chain is tRNA/tmRNA (uracil-C(5))-methyltransferase (366 aa).

Residues Gln-190, Tyr-218, Asn-223, Glu-239, and Asp-299 each coordinate S-adenosyl-L-methionine. The active-site Nucleophile is the Cys-324. Residue Glu-358 is the Proton acceptor of the active site.

The protein belongs to the class I-like SAM-binding methyltransferase superfamily. RNA M5U methyltransferase family. TrmA subfamily.

The enzyme catalyses uridine(54) in tRNA + S-adenosyl-L-methionine = 5-methyluridine(54) in tRNA + S-adenosyl-L-homocysteine + H(+). The catalysed reaction is uridine(341) in tmRNA + S-adenosyl-L-methionine = 5-methyluridine(341) in tmRNA + S-adenosyl-L-homocysteine + H(+). Its function is as follows. Dual-specificity methyltransferase that catalyzes the formation of 5-methyluridine at position 54 (m5U54) in all tRNAs, and that of position 341 (m5U341) in tmRNA (transfer-mRNA). This is tRNA/tmRNA (uracil-C(5))-methyltransferase from Salmonella heidelberg (strain SL476).